A 276-amino-acid polypeptide reads, in one-letter code: Zinc transporter ZTP29 (276 aa).

Over M1–L6 the chain is Cytoplasmic. The helical transmembrane segment at V7–V27 threads the bilayer. At L28–K35 the chain is on the lumenal side. A helical membrane pass occupies residues M36–L56. The Cytoplasmic segment spans residues A57–S63. A helical membrane pass occupies residues I64–T84. The Lumenal segment spans residues K85–S123. A helical membrane pass occupies residues G124–L144. At G145–L156 the chain is on the cytoplasmic side. A helical transmembrane segment spans residues A157 to F177. Over A178–K187 the chain is Lumenal. A helical membrane pass occupies residues L188 to P208. Topologically, residues R209–L219 are cytoplasmic. The chain crosses the membrane as a helical span at residues L220–F240. At D241–K250 the chain is on the lumenal side. A helical transmembrane segment spans residues A251–P271. The Cytoplasmic portion of the chain corresponds to E272–L276.

It belongs to the ZIP transporter (TC 2.A.5) family. ZupT subfamily. As to expression, expressed in hypocotyls, cotyledons, leaves and anthers.

It is found in the endoplasmic reticulum membrane. In terms of biological role, zinc transporter involved response to salt stress. May act through the regulation of zinc levels required to induce the unfolded protein response (UPR) pathway. In Arabidopsis thaliana (Mouse-ear cress), this protein is Zinc transporter ZTP29 (ZTP29).